The primary structure comprises 1299 residues: Outer capsid protein VP1 (1299 aa).

It belongs to the aquareoviridae outer capsid VP1 protein family.

The protein localises to the virion. It carries out the reaction a 5'-end diphospho-ribonucleoside in mRNA + GTP + H(+) = a 5'-end (5'-triphosphoguanosine)-ribonucleoside in mRNA + diphosphate. The catalysed reaction is a 5'-end (5'-triphosphoguanosine)-ribonucleoside in mRNA + S-adenosyl-L-methionine = a 5'-end (N(7)-methyl 5'-triphosphoguanosine)-ribonucleoside in mRNA + S-adenosyl-L-homocysteine. Functionally, outer capsid protein involved in mRNA capping. Catalyzes the last 3 enzymatic activities for formation of the 5' cap structure on the viral plus-strand transcripts, namely the RNA guanylyltransferase, RNA-7N- and RNA-2'O-methyltransferase activities. The polypeptide is Outer capsid protein VP1 (S1) (Aquareovirus C (isolate Golden shiner/USA/GSRV/1977) (AQRV-C)).